The chain runs to 262 residues: S-methyl-5'-thioadenosine phosphorylase (262 aa).

Phosphate is bound by residues Ser-12, Arg-54–His-55, and Ser-87–Ala-88. Met-185 is a binding site for substrate. Phosphate is bound at residue Thr-186. Residue Asp-209 to Asp-211 participates in substrate binding.

Belongs to the PNP/MTAP phosphorylase family. MTAP subfamily. In terms of assembly, homohexamer. Dimer of a homotrimer.

The enzyme catalyses S-methyl-5'-thioadenosine + phosphate = 5-(methylsulfanyl)-alpha-D-ribose 1-phosphate + adenine. It functions in the pathway amino-acid biosynthesis; L-methionine biosynthesis via salvage pathway; S-methyl-5-thio-alpha-D-ribose 1-phosphate from S-methyl-5'-thioadenosine (phosphorylase route): step 1/1. Catalyzes the reversible phosphorylation of S-methyl-5'-thioadenosine (MTA) to adenine and 5-methylthioribose-1-phosphate. Involved in the breakdown of MTA, a major by-product of polyamine biosynthesis. Responsible for the first step in the methionine salvage pathway after MTA has been generated from S-adenosylmethionine. Has broad substrate specificity with 6-aminopurine nucleosides as preferred substrates. This Thermofilum pendens (strain DSM 2475 / Hrk 5) protein is S-methyl-5'-thioadenosine phosphorylase.